We begin with the raw amino-acid sequence, 418 residues long: Serine hydroxymethyltransferase 2 (418 aa).

Residues Leu-121 and 125–127 (GHL) contribute to the (6S)-5,6,7,8-tetrahydrofolate site. The residue at position 230 (Lys-230) is an N6-(pyridoxal phosphate)lysine. 355-357 (SPF) contributes to the (6S)-5,6,7,8-tetrahydrofolate binding site.

This sequence belongs to the SHMT family. Homodimer. It depends on pyridoxal 5'-phosphate as a cofactor.

Its subcellular location is the cytoplasm. It catalyses the reaction (6R)-5,10-methylene-5,6,7,8-tetrahydrofolate + glycine + H2O = (6S)-5,6,7,8-tetrahydrofolate + L-serine. It participates in one-carbon metabolism; tetrahydrofolate interconversion. It functions in the pathway amino-acid biosynthesis; glycine biosynthesis; glycine from L-serine: step 1/1. In terms of biological role, catalyzes the reversible interconversion of serine and glycine with tetrahydrofolate (THF) serving as the one-carbon carrier. This reaction serves as the major source of one-carbon groups required for the biosynthesis of purines, thymidylate, methionine, and other important biomolecules. Also exhibits THF-independent aldolase activity toward beta-hydroxyamino acids, producing glycine and aldehydes, via a retro-aldol mechanism. The chain is Serine hydroxymethyltransferase 2 from Pseudomonas aeruginosa (strain ATCC 15692 / DSM 22644 / CIP 104116 / JCM 14847 / LMG 12228 / 1C / PRS 101 / PAO1).